Consider the following 197-residue polypeptide: Protein LURP-one-related 9 (197 aa).

This sequence belongs to the LOR family.

Functionally, might be related to the phospholipid scramblase and tubby-like superfamily of membrane tethered transcription factors. The sequence is that of Protein LURP-one-related 9 from Arabidopsis thaliana (Mouse-ear cress).